An 85-amino-acid polypeptide reads, in one-letter code: Small ribosomal subunit protein uS17 (85 aa).

The protein belongs to the universal ribosomal protein uS17 family. As to quaternary structure, part of the 30S ribosomal subunit.

Functionally, one of the primary rRNA binding proteins, it binds specifically to the 5'-end of 16S ribosomal RNA. This is Small ribosomal subunit protein uS17 from Haemophilus influenzae (strain 86-028NP).